A 657-amino-acid chain; its full sequence is Probable potassium transport system protein Kup (657 aa).

The segment at 1–25 (MGSGPADEEHTVDTEPGVSPPRRTV) is disordered. The next 12 helical transmembrane spans lie at 35–55 (VVVGALGVVFGDIGTSPIYTI), 77–97 (VVSLIFWSVMLIVTATYVLLV), 127–147 (TAVLAGLGIFGAALFFGDSMI), 165–185 (PGLEEWIVPITAVIIVALFSV), 196–216 (LFGPVMIVWFVSIGACGVSGI), 234–254 (FFFGHFGIAFFALAAVVLAVT), 275–295 (WLVLVLPACVLSYLGQGALLL), 315–335 (WPMVLLATAATVIASQAVITG), 365–385 (IYVPWINWVLMVSVLTLVFAF), 394–414 (AFGMAVTGTITITTLLFFYIV), 422–442 (LWLVVCGAGCLLAVDLLFLAA), and 447–467 (LVHGAWLPLLIALTAFTVMTT).

It belongs to the HAK/KUP transporter (TC 2.A.72) family.

It is found in the cell membrane. It carries out the reaction K(+)(in) + H(+)(in) = K(+)(out) + H(+)(out). Transport of potassium into the cell. Likely operates as a K(+):H(+) symporter. In Rhodococcus jostii (strain RHA1), this protein is Probable potassium transport system protein Kup.